A 180-amino-acid polypeptide reads, in one-letter code: Ribosome maturation factor RimM (180 aa).

The PRC barrel domain occupies 97 to 169 (PGELSWDFFV…IITVDLPEGL (73 aa)).

Belongs to the RimM family. As to quaternary structure, binds ribosomal protein uS19.

It is found in the cytoplasm. In terms of biological role, an accessory protein needed during the final step in the assembly of 30S ribosomal subunit, possibly for assembly of the head region. Essential for efficient processing of 16S rRNA. May be needed both before and after RbfA during the maturation of 16S rRNA. It has affinity for free ribosomal 30S subunits but not for 70S ribosomes. The chain is Ribosome maturation factor RimM from Bacteroides fragilis (strain YCH46).